Here is a 164-residue protein sequence, read N- to C-terminus: MTDTTAAPPAAPEDGAPGETGIRIIAQFVRDFSFESPHAPDSLRAGGAPPAIDMGVEMNARGRPDGLFEVDLKLSARATRDEQPVFHVEVLYGGLFHIAGVPEGDLEPVLLIECPRFLFPYARRLISDVTTEGGFPPFLIDPIDFAGVYAARKAQAEGVVVGNA.

Belongs to the SecB family. As to quaternary structure, homotetramer, a dimer of dimers. One homotetramer interacts with 1 SecA dimer.

The protein localises to the cytoplasm. Functionally, one of the proteins required for the normal export of preproteins out of the cell cytoplasm. It is a molecular chaperone that binds to a subset of precursor proteins, maintaining them in a translocation-competent state. It also specifically binds to its receptor SecA. The sequence is that of Protein-export protein SecB from Caulobacter sp. (strain K31).